Here is a 526-residue protein sequence, read N- to C-terminus: CTP synthase (526 aa).

The interval 1 to 270 (MKYIFVTGGV…ADVLSTHLGL (270 aa)) is amidoligase domain. Residue serine 12 participates in CTP binding. UTP is bound at residue serine 12. Residues 13–18 (GLGKGI) and aspartate 70 contribute to the ATP site. The Mg(2+) site is built by aspartate 70 and glutamate 145. CTP is bound by residues 152–154 (DIE), 191–196 (KTKPTQ), and lysine 227. UTP is bound by residues 191–196 (KTKPTQ) and lysine 227. Residues 293–525 (VAIVSKYGIE…VEACRANKRT (233 aa)) form the Glutamine amidotransferase type-1 domain. Position 349 (glycine 349) interacts with L-glutamine. Cysteine 376 serves as the catalytic Nucleophile; for glutamine hydrolysis. L-glutamine is bound by residues 377-380 (LGFQ), glutamate 400, and arginine 455. Catalysis depends on residues histidine 498 and glutamate 500.

It belongs to the CTP synthase family. Homotetramer.

The enzyme catalyses UTP + L-glutamine + ATP + H2O = CTP + L-glutamate + ADP + phosphate + 2 H(+). It catalyses the reaction L-glutamine + H2O = L-glutamate + NH4(+). It carries out the reaction UTP + NH4(+) + ATP = CTP + ADP + phosphate + 2 H(+). Its pathway is pyrimidine metabolism; CTP biosynthesis via de novo pathway; CTP from UDP: step 2/2. Its activity is regulated as follows. Allosterically activated by GTP, when glutamine is the substrate; GTP has no effect on the reaction when ammonia is the substrate. The allosteric effector GTP functions by stabilizing the protein conformation that binds the tetrahedral intermediate(s) formed during glutamine hydrolysis. Inhibited by the product CTP, via allosteric rather than competitive inhibition. In terms of biological role, catalyzes the ATP-dependent amination of UTP to CTP with either L-glutamine or ammonia as the source of nitrogen. Regulates intracellular CTP levels through interactions with the four ribonucleotide triphosphates. In Methanoregula boonei (strain DSM 21154 / JCM 14090 / 6A8), this protein is CTP synthase.